Here is a 242-residue protein sequence, read N- to C-terminus: 1-(5-phosphoribosyl)-5-[(5-phosphoribosylamino)methylideneamino] imidazole-4-carboxamide isomerase (242 aa).

D10 acts as the Proton acceptor in catalysis. D132 acts as the Proton donor in catalysis.

This sequence belongs to the HisA/HisF family.

It is found in the cytoplasm. It catalyses the reaction 1-(5-phospho-beta-D-ribosyl)-5-[(5-phospho-beta-D-ribosylamino)methylideneamino]imidazole-4-carboxamide = 5-[(5-phospho-1-deoxy-D-ribulos-1-ylimino)methylamino]-1-(5-phospho-beta-D-ribosyl)imidazole-4-carboxamide. Its pathway is amino-acid biosynthesis; L-histidine biosynthesis; L-histidine from 5-phospho-alpha-D-ribose 1-diphosphate: step 4/9. This is 1-(5-phosphoribosyl)-5-[(5-phosphoribosylamino)methylideneamino] imidazole-4-carboxamide isomerase from Streptococcus sanguinis (strain SK36).